We begin with the raw amino-acid sequence, 341 residues long: Anthranilate phosphoribosyltransferase (341 aa).

Residues glycine 81, 84 to 85, 91 to 94, 109 to 117, and serine 121 each bind 5-phospho-alpha-D-ribose 1-diphosphate; these read GD, NVST, and KHGNRSVSS. Glycine 81 contributes to the anthranilate binding site. Serine 93 serves as a coordination point for Mg(2+). An anthranilate-binding site is contributed by asparagine 112. Residue arginine 167 participates in anthranilate binding. The Mg(2+) site is built by aspartate 226 and glutamate 227.

It belongs to the anthranilate phosphoribosyltransferase family. As to quaternary structure, homodimer. Requires Mg(2+) as cofactor.

It carries out the reaction N-(5-phospho-beta-D-ribosyl)anthranilate + diphosphate = 5-phospho-alpha-D-ribose 1-diphosphate + anthranilate. It participates in amino-acid biosynthesis; L-tryptophan biosynthesis; L-tryptophan from chorismate: step 2/5. In terms of biological role, catalyzes the transfer of the phosphoribosyl group of 5-phosphorylribose-1-pyrophosphate (PRPP) to anthranilate to yield N-(5'-phosphoribosyl)-anthranilate (PRA). The chain is Anthranilate phosphoribosyltransferase from Saccharophagus degradans (strain 2-40 / ATCC 43961 / DSM 17024).